Here is a 219-residue protein sequence, read N- to C-terminus: MSGSSGPLSWPGPRPCALLFLLLLGPSSVLAISFHLPVNSRKCLREEIHKDLLVTGAYEITDQSGGAGGLRTHLKITDSAGHILYAKEDATKGKFAFTTEDYDMFEVCFESKGTGRIPDQLVILDMKHGVEAKNYEEIAKVEKLKPLEVELRRLEDLSESIVNDFAYMKKREEEMRDTNESTNTRVLYFSIFSMLCLIGLATWQVFYLRRFFKAKKLIE.

An N-terminal signal peptide occupies residues methionine 1–alanine 31. Residues methionine 1–glutamate 142 form a required for interaction with STX17 region. Residues isoleucine 32–arginine 185 lie on the Lumenal side of the membrane. The region spanning arginine 41 to serine 193 is the GOLD domain. Positions leucine 147–threonine 178 are required for TMED10 and TMED2 cis-Golgi network localization. A dimethylated arginine mark is found at arginine 171 and arginine 176. An N-linked (GlcNAc...) asparagine glycan is attached at asparagine 179. Residues valine 186–phenylalanine 206 form a helical membrane-spanning segment. Positions glutamine 204 to glutamate 219 are interaction with COPG1. The Cytoplasmic segment spans residues tyrosine 207 to glutamate 219. Positions tyrosine 207–glutamate 219 are interaction with ARF1 and IL1B. The COPII vesicle coat-binding signature appears at phenylalanine 211–phenylalanine 212. The short motif at phenylalanine 211–glutamate 219 is the COPI vesicle coat-binding element.

It belongs to the EMP24/GP25L family. Predominantly dimeric and to a lesser extent monomeric in the ER. Monomer and dimer in ERGIC and cis-Golgi network. Forms homooligomer (via GOLD domain); the assembly is promoted by direct binding with leaderless cargos and may form a protein channel that facilitates cargo entry into the ERGIC. Forms heterooligomeric complexes with other members of the p24 family such as TMED2, TMED7 and TMED9. Interacts (via GOLD domain) with TMED2 (via GOLD domain); the complex is required for export of TMED10 from the ER to the cis-Golgi network; the complex is proposed to be involved in cis-Golgi network dynamics and / or biogenesis. Associates with the COPI vesicle coat subunits (coatomer). Tetramerization of the cytoplasmic domain at the Golgi membrane in vitro; the complex is proposed to interact with COPI coatomer and induce budding of the vesicles. Interacts with COPG1; the interaction involves TMED10 homodimer. Interacts with ARF1 (GDP-bound); the interaction probably involves a TMED10 oligomer. Interacts with SEC23A, SEC24B, SEC24C and SEC24D components of the coat protein complex II/COPII, indicative of an association of TMED10 with the COPII vesicle coat. Interacts with CD59. Interacts with MPPE1/PGAP5; the complex might recruit and sort GPI-anchored proteins to the ER-exit site, or the interaction might lead to recycling of PGAP5 between the ER and the Golgi. Interacts with F2LR1/PAR2. Interacts with KDELR2/ERD2; the interaction is disrupted by KDELR2 ligand. Found in a complex composed at least of SURF4, TMED2 and TMED10. Associates with the presenilin-dependent gamma-secretase complex. Interacts with STX17; the interaction is direct. Interacts with IL-1; the interaction is direct. Interacts with RAB21 (active GTP-bound form); the interaction is indirect and regulates TMED10 abundance and localization at the Golgi.

Its subcellular location is the endoplasmic reticulum membrane. It localises to the endoplasmic reticulum-Golgi intermediate compartment membrane. The protein localises to the golgi apparatus membrane. It is found in the golgi apparatus. The protein resides in the cis-Golgi network membrane. Its subcellular location is the trans-Golgi network membrane. It localises to the cytoplasmic vesicle. The protein localises to the secretory vesicle membrane. It is found in the cell membrane. The protein resides in the melanosome. Functionally, cargo receptor involved in protein vesicular trafficking and quality control in the endoplasmic reticulum (ER) and Golgi. The p24 protein family is a group of transmembrane proteins that bind coat protein complex I/COPI and coat protein complex II/COPII involved in vesicular trafficking between the membranes. Acts at the lumenal side for incorporation of secretory cargo molecules into transport vesicles and involved in vesicle coat formation at the cytoplasmic side. Mainly functions in the early secretory pathway and cycles between the ER, ER-Golgi intermediate compartment (ERGIC) and Golgi, mediating cargo transport through COPI and COPII-coated vesicles. In COPII vesicle-mediated anterograde transport, involved in the transport of GPI-anchored proteins by acting together with TMED2 as their cargo receptor; the function specifically implies SEC24C and SEC24D of the COPII vesicle coat and lipid raft-like microdomains of the ER. Recognizes GPI anchors structural remodeled in the ER by the GPI inositol-deacylase/PGAP1 and the metallophosphoesterase MPPE1/PGAP5. In COPI vesicle-mediated retrograde transport, involved in the biogenesis of COPI vesicles and vesicle coat recruitment. Involved in trafficking of amyloid beta A4 protein and soluble APP-beta release (independent from the modulation of gamma-secretase activity). Involved in the KDELR2-mediated retrograde transport of the toxin A subunit (CTX-A-K63)together with COPI and the COOH terminus of KDELR2. On Golgi membranes, acts as a primary receptor for ARF1-GDP, a GTP-binding protein involved in COPI-vesicle formation. Increases coatomer-dependent GTPase-activating activity of ARFGAP2 which mediates the hydrolysis of ARF1-bound GTP and therefore modulates protein trafficking from the Golgi apparatus. Involved in the exocytic trafficking of G protein-coupled receptors F2LR1/PAR2 (trypsin and tryspin-like enzyme receptor), OPRM1 (opioid receptor) and P2RY4 (UTD and UDP receptor) from the Golgi to the plasma membrane, thus contributing to receptor resensitization. In addition to its cargo receptor activity, may also act as a protein channel after oligomerization, facilitating the post-translational entry of leaderless cytoplasmic cargo into the ERGIC. Involved in the translocation into ERGIC, the vesicle entry and the secretion of leaderless cargos (lacking the secretion signal sequence), including the mature form of interleukin 1/IL-1 family members, the alpha-crystallin B chain HSPB5, the carbohydrate-binding proteins galectin-1/LGALS1 and galectin-3/LGALS3, the microtubule-associated protein Tau/MAPT, and the annexin A1/ANXA1; the translocation process is dependent on cargo protein unfolding and enhanced by chaperones HSP90AB1 and HSP90B1/GRP9. Could also associates with the presenilin-dependent gamma-secretase complex in order to regulate gamma-cleavages of the amyloid beta A4 protein to yield amyloid-beta 40/Abeta40. The sequence is that of Transmembrane emp24 domain-containing protein 10 (TMED10) from Mesocricetus auratus (Golden hamster).